The chain runs to 604 residues: Elongation factor 4 (604 aa).

Residues 7-189 (SKIRNFCIIA…SIVHLVPPPS (183 aa)) form the tr-type G domain. GTP is bound by residues 19 to 24 (DHGKST) and 136 to 139 (NKID).

It belongs to the TRAFAC class translation factor GTPase superfamily. Classic translation factor GTPase family. LepA subfamily.

The protein resides in the cell inner membrane. It catalyses the reaction GTP + H2O = GDP + phosphate + H(+). Functionally, required for accurate and efficient protein synthesis under certain stress conditions. May act as a fidelity factor of the translation reaction, by catalyzing a one-codon backward translocation of tRNAs on improperly translocated ribosomes. Back-translocation proceeds from a post-translocation (POST) complex to a pre-translocation (PRE) complex, thus giving elongation factor G a second chance to translocate the tRNAs correctly. Binds to ribosomes in a GTP-dependent manner. The polypeptide is Elongation factor 4 (Synechococcus sp. (strain ATCC 27144 / PCC 6301 / SAUG 1402/1) (Anacystis nidulans)).